The following is a 118-amino-acid chain: Large ribosomal subunit protein uL24 (118 aa).

It belongs to the universal ribosomal protein uL24 family. As to quaternary structure, part of the 50S ribosomal subunit.

One of two assembly initiator proteins, it binds directly to the 5'-end of the 23S rRNA, where it nucleates assembly of the 50S subunit. In terms of biological role, one of the proteins that surrounds the polypeptide exit tunnel on the outside of the subunit. The protein is Large ribosomal subunit protein uL24 of Prochlorococcus marinus (strain NATL1A).